The chain runs to 218 residues: Small ribosomal subunit protein uS3c (218 aa).

In terms of domain architecture, KH type-2 spans 47-118; it reads VQKHMRISSG…RLNIAIARVA (72 aa).

This sequence belongs to the universal ribosomal protein uS3 family. Part of the 30S ribosomal subunit.

It localises to the plastid. The protein resides in the chloroplast. The polypeptide is Small ribosomal subunit protein uS3c (rps3) (Nymphaea alba (White water-lily)).